The primary structure comprises 580 residues: Peptide transporter PTR_B (580 aa).

Residues 1–30 are compositionally biased toward basic and acidic residues; it reads MSTEKLQNDDKVVDEKYVDADEHSLVRSQD. Residues 1 to 45 form a disordered region; it reads MSTEKLQNDDKVVDEKYVDADEHSLVRSQDESFPQTEEGGEPTDH. The helical transmembrane segment at 57-78 threads the bilayer; that stretch reads IPMSCWLVAIVELSERFTYYGL. An N-linked (GlcNAc...) asparagine glycan is attached at Asn101. Helical transmembrane passes span 107–127, 134–154, 163–183, 219–239, 249–269, 326–346, 370–390, 402–422, 449–469, 484–504, and 513–533; these read ALSY…AWIA, YFTI…LFIT, TTSL…TGGI, VSNV…SVIA, FWAA…ALVL, ALYA…YGQM, INSI…YPFI, IFWG…LQHF, IALQ…ASIT, SFIM…GIAL, and MVWT…IFWF.

It belongs to the major facilitator superfamily. Proton-dependent oligopeptide transporter (POT/PTR) (TC 2.A.17) family.

It is found in the cell membrane. The enzyme catalyses a dipeptide(out) + H(+)(out) = a dipeptide(in) + H(+)(in). It catalyses the reaction an L-amino acid tripeptide(out) + H(+)(out) = an L-amino acid tripeptide(in) + H(+)(in). Functionally, peptide transporter that exploits the inwardly directed proton motive force to facilitate the cellular uptake of di/tripeptides. Shows strong uptake specificity towards the dipeptides Tyr-Phe and Gly-His, when compared to PTR_A and PTR_C. This Candidozyma auris (Yeast) protein is Peptide transporter PTR_B.